We begin with the raw amino-acid sequence, 305 residues long: Aspartate carbamoyltransferase catalytic subunit (305 aa).

The carbamoyl phosphate site is built by R51 and T52. K79 lines the L-aspartate pocket. The carbamoyl phosphate site is built by R101, H130, and Q133. Residues R163 and R215 each coordinate L-aspartate. 2 residues coordinate carbamoyl phosphate: G256 and P257.

It belongs to the aspartate/ornithine carbamoyltransferase superfamily. ATCase family. Heterododecamer (2C3:3R2) of six catalytic PyrB chains organized as two trimers (C3), and six regulatory PyrI chains organized as three dimers (R2).

The enzyme catalyses carbamoyl phosphate + L-aspartate = N-carbamoyl-L-aspartate + phosphate + H(+). It functions in the pathway pyrimidine metabolism; UMP biosynthesis via de novo pathway; (S)-dihydroorotate from bicarbonate: step 2/3. Catalyzes the condensation of carbamoyl phosphate and aspartate to form carbamoyl aspartate and inorganic phosphate, the committed step in the de novo pyrimidine nucleotide biosynthesis pathway. The protein is Aspartate carbamoyltransferase catalytic subunit of Ehrlichia canis (strain Jake).